Here is a 216-residue protein sequence, read N- to C-terminus: Refilin-A (216 aa).

The tract at residues 1–83 is disordered; it reads MVGHLHLQGM…LPNPPASEMR (83 aa). Over residues 12–22 the composition is skewed to basic and acidic residues; the sequence is DSLKEQGREGL. Pro residues predominate over residues 29 to 39; it reads GLPPSPSPSPP. Residues 57–71 are compositionally biased toward low complexity; the sequence is ASSEPPGPSEARAPP. Arg163 carries the asymmetric dimethylarginine modification.

The protein belongs to the Refilin family. Interacts with FLNA and FLNB.

The protein localises to the cytoplasm. It is found in the cytoskeleton. Its function is as follows. Involved in the regulation of the perinuclear actin network and nuclear shape through interaction with filamins. Plays an essential role in actin cytoskeleton formation in developing cartilaginous cells. The sequence is that of Refilin-A from Homo sapiens (Human).